The chain runs to 254 residues: Ribosomal RNA large subunit methyltransferase E (254 aa).

Residues 1 to 18 are compositionally biased toward gly residues; that stretch reads MTNSGKTGGKSGKGGTGG. Residues 1-26 are disordered; that stretch reads MTNSGKTGGKSGKGGTGGARALKVRV. Residues glycine 89, tryptophan 91, aspartate 119, aspartate 135, and aspartate 159 each coordinate S-adenosyl-L-methionine. Lysine 199 (proton acceptor) is an active-site residue.

Belongs to the class I-like SAM-binding methyltransferase superfamily. RNA methyltransferase RlmE family.

The protein localises to the cytoplasm. The enzyme catalyses uridine(2552) in 23S rRNA + S-adenosyl-L-methionine = 2'-O-methyluridine(2552) in 23S rRNA + S-adenosyl-L-homocysteine + H(+). Specifically methylates the uridine in position 2552 of 23S rRNA at the 2'-O position of the ribose in the fully assembled 50S ribosomal subunit. The chain is Ribosomal RNA large subunit methyltransferase E from Parvibaculum lavamentivorans (strain DS-1 / DSM 13023 / NCIMB 13966).